Reading from the N-terminus, the 415-residue chain is Gamma-glutamyl phosphate reductase (415 aa).

Belongs to the gamma-glutamyl phosphate reductase family.

It localises to the cytoplasm. The catalysed reaction is L-glutamate 5-semialdehyde + phosphate + NADP(+) = L-glutamyl 5-phosphate + NADPH + H(+). It participates in amino-acid biosynthesis; L-proline biosynthesis; L-glutamate 5-semialdehyde from L-glutamate: step 2/2. In terms of biological role, catalyzes the NADPH-dependent reduction of L-glutamate 5-phosphate into L-glutamate 5-semialdehyde and phosphate. The product spontaneously undergoes cyclization to form 1-pyrroline-5-carboxylate. The sequence is that of Gamma-glutamyl phosphate reductase from Mycobacterium sp. (strain JLS).